The chain runs to 360 residues: Squamosa promoter-binding-like protein 7 (360 aa).

A compositionally biased stretch (gly residues) spans 74-89 (AQGSGGGGGGGGGGSA). Residues 74 to 98 (AQGSGGGGGGGGGGSADQGKRKEKA) form a disordered region. An SBP-type zinc finger spans residues 105–182 (VPRCQVEGCD…AGHNERRRRS (78 aa)). Residues C108, C113, C130, H133, C149, C152, H156, and C168 each coordinate Zn(2+). The Bipartite nuclear localization signal motif lies at 165 to 181 (KKSCRRRLAGHNERRRR). Over residues 172-182 (LAGHNERRRRS) the composition is skewed to basic residues. Disordered stretches follow at residues 172-196 (LAGH…AHPH), 261-306 (FFSD…HENQ), and 318-360 (TTAA…ARVV).

Expressed in young panicles.

It localises to the nucleus. Trans-acting factor that binds specifically to the consensus nucleotide sequence 5'-TNCGTACAA-3'. May be involved in panicle development. This is Squamosa promoter-binding-like protein 7 (SPL7) from Oryza sativa subsp. japonica (Rice).